We begin with the raw amino-acid sequence, 332 residues long: Biotin synthase (332 aa).

A Radical SAM core domain is found at His53–Arg282. [4Fe-4S] cluster is bound by residues Cys71, Cys75, and Cys78. Positions 115, 147, 207, and 277 each coordinate [2Fe-2S] cluster.

Belongs to the radical SAM superfamily. Biotin synthase family. In terms of assembly, homodimer. [4Fe-4S] cluster is required as a cofactor. The cofactor is [2Fe-2S] cluster.

It catalyses the reaction (4R,5S)-dethiobiotin + (sulfur carrier)-SH + 2 reduced [2Fe-2S]-[ferredoxin] + 2 S-adenosyl-L-methionine = (sulfur carrier)-H + biotin + 2 5'-deoxyadenosine + 2 L-methionine + 2 oxidized [2Fe-2S]-[ferredoxin]. It participates in cofactor biosynthesis; biotin biosynthesis; biotin from 7,8-diaminononanoate: step 2/2. Functionally, catalyzes the conversion of dethiobiotin (DTB) to biotin by the insertion of a sulfur atom into dethiobiotin via a radical-based mechanism. This Bacillus cereus (strain B4264) protein is Biotin synthase.